Here is an 80-residue protein sequence, read N- to C-terminus: Defensin-like protein 2 (80 aa).

Residues 1 to 29 (MAKFASIIVLLFVALVVFAAFEEPTMVEA) form the signal peptide. The residue at position 30 (Q30) is a Pyrrolidone carboxylic acid. Disulfide bonds link C33–C80, C44–C65, C50–C74, and C54–C76.

Belongs to the DEFL family.

It is found in the secreted. Its function is as follows. Possesses antifungal activity sensitive to inorganic cations. Induces potential changes in fungal membranes and increased K(+) efflux and Ca(2+) uptake. The chain is Defensin-like protein 2 (AFP2) from Raphanus sativus (Radish).